A 572-amino-acid polypeptide reads, in one-letter code: Methionine--tRNA ligase (572 aa).

Positions 11–21 (PYINGIKHLGN) match the 'HIGH' region motif. Residues Cys143, Cys146, Cys156, and Cys159 each coordinate Zn(2+). The short motif at 346 to 350 (QFSTS) is the 'KMSKS' region element. Residue Thr349 coordinates ATP.

Belongs to the class-I aminoacyl-tRNA synthetase family. MetG type 1 subfamily. Monomer. Requires Zn(2+) as cofactor.

It is found in the cytoplasm. The catalysed reaction is tRNA(Met) + L-methionine + ATP = L-methionyl-tRNA(Met) + AMP + diphosphate. Its function is as follows. Is required not only for elongation of protein synthesis but also for the initiation of all mRNA translation through initiator tRNA(fMet) aminoacylation. This Dinoroseobacter shibae (strain DSM 16493 / NCIMB 14021 / DFL 12) protein is Methionine--tRNA ligase.